Reading from the N-terminus, the 278-residue chain is S-formylglutathione hydrolase YeiG (278 aa).

Active-site charge relay system residues include Ser145, Asp223, and His256.

It belongs to the esterase D family.

It carries out the reaction S-formylglutathione + H2O = formate + glutathione + H(+). Functionally, serine hydrolase involved in the detoxification of formaldehyde. Hydrolyzes S-formylglutathione to glutathione and formate. The protein is S-formylglutathione hydrolase YeiG (yeiG) of Shigella dysenteriae serotype 1 (strain Sd197).